Reading from the N-terminus, the 246-residue chain is uncharacterized protein (246 aa).

Composition is skewed to basic residues over residues 1 to 10 (MVWRFQKHIG) and 79 to 97 (TRRR…KAGR). A disordered region spans residues 1–184 (MVWRFQKHIG…LPPAHVPPTL (184 aa)). The segment covering 158 to 180 (PPFPPPPPPGDPTPPSPLPPAHV) has biased composition (pro residues).

This is an uncharacterized protein from Homo sapiens (Human).